The following is a 791-amino-acid chain: Ataxin-2 homolog (791 aa).

Residues 1–22 (MATRSVSMKQTSQRAASPNKTQ) show a composition bias toward polar residues. Disordered stretches follow at residues 1 to 28 (MATRSVSMKQTSQRAASPNKTQGAKKWS), 60 to 100 (RGGV…QQRV), 112 to 134 (RTETRQRELRRWMPDPEDAGVPL), 235 to 311 (TRSN…KEGQ), 326 to 423 (SLDS…TKLG), 452 to 505 (KPAP…PVSS), 613 to 634 (NPSQHTSVAPSPNGTPTSGNSS), and 707 to 791 (PMYG…EAKP). Residues 76-96 (SLASSEENVSSVSGSAKSNNS) show a composition bias toward low complexity. Composition is skewed to basic and acidic residues over residues 112 to 125 (RTETRQRELRRWMP) and 243 to 256 (NNKDQKPKNHEAPH). Polar residues predominate over residues 326–337 (SLDSKQPSSTKS). Basic and acidic residues-rich tracts occupy residues 360-371 (DSKEPRKEEAEK) and 395-418 (SKEEEKPSTEPEKPSVVTQRKETT). Low complexity predominate over residues 473 to 486 (SIPSTTPQSPSVVS). Residues 487–497 (NGENKPSSSPV) are compositionally biased toward polar residues. Low complexity-rich tracts occupy residues 715 to 725 (SNSQRSFNSSN) and 734 to 760 (NNNASNTFSHSNASTSSSLNAAPNTTA). The span at 774-791 (DATEKTEKDASANQEAKP) shows a compositional bias: basic and acidic residues.

It belongs to the ataxin-2 family. In terms of assembly, interacts with mkt1.

The protein localises to the cytoplasm. Its function is as follows. Involved in post-transcriptional regulation of gene expression, probably by association with mkt1. This Schizosaccharomyces pombe (strain 972 / ATCC 24843) (Fission yeast) protein is Ataxin-2 homolog.